A 154-amino-acid chain; its full sequence is Large ribosomal subunit protein uL22c (154 aa).

It belongs to the universal ribosomal protein uL22 family. As to quaternary structure, part of the 50S ribosomal subunit.

The protein localises to the plastid. Its subcellular location is the chloroplast. Its function is as follows. This protein binds specifically to 23S rRNA. Functionally, the globular domain of the protein is located near the polypeptide exit tunnel on the outside of the subunit, while an extended beta-hairpin is found that lines the wall of the exit tunnel in the center of the 70S ribosome. This chain is Large ribosomal subunit protein uL22c (rpl22), found in Platanus occidentalis (Sycamore).